We begin with the raw amino-acid sequence, 309 residues long: ATP-dependent Clp protease proteolytic subunit 3, chloroplastic (309 aa).

Residues 1 to 70 constitute a chloroplast transit peptide; the sequence is MEMSLRLASS…WDVSSFSIDS (70 aa). Val71 carries the N-acetylvaline modification. The Nucleophile role is filled by Ser164. Residue His189 is part of the active site. Phosphothreonine is present on Thr194. Positions 290 to 309 are disordered; the sequence is DNTNLPSERSMTQNGYAAIE. Residues 292-309 are compositionally biased toward polar residues; sequence TNLPSERSMTQNGYAAIE.

The protein belongs to the peptidase S14 family. As to quaternary structure, component of the chloroplastic Clp protease core complex which consist of at least 16 proteins: CLPP4 (3 copies), CLPP5 (3 copies), CLPR4 (2 copies), ClpP1 (1 copy), CLPP6 (1 copy), CLPR2 (1 copy), CLPT1 (1 copy), CLPT2 (1 copy) and 3 copies of CLPP3 and/or CLPR1 and/or CLPR3. The core complex is organized in two heptameric rings, one containing CLPP3,4,5,6 in a 1:2:3:1 ratio and the other CLPP1 and CLPR1,2,3,4 in a 3:1:1:1:1 ratio. Interacts with CHIP. Ubiquitinated in vitro by CHIP. In terms of tissue distribution, mostly expressed in leaves. Also detected in stems, and to a lower extent, in roots (at protein level).

The protein resides in the plastid. The protein localises to the chloroplast stroma. It catalyses the reaction Hydrolysis of proteins to small peptides in the presence of ATP and magnesium. alpha-casein is the usual test substrate. In the absence of ATP, only oligopeptides shorter than five residues are hydrolyzed (such as succinyl-Leu-Tyr-|-NHMec, and Leu-Tyr-Leu-|-Tyr-Trp, in which cleavage of the -Tyr-|-Leu- and -Tyr-|-Trp bonds also occurs).. In terms of biological role, cleaves peptides in various proteins in a process that requires ATP hydrolysis. Has a chymotrypsin-like activity. Plays a major role in the degradation of misfolded proteins. In the absence of CLPP3, modified ClpPR core(s) could be formed, albeit at strongly reduced levels. The sequence is that of ATP-dependent Clp protease proteolytic subunit 3, chloroplastic from Arabidopsis thaliana (Mouse-ear cress).